Consider the following 701-residue polypeptide: MEAVIKVISSACKTYCGKISPSKKEIGAMLSLLQKEGLLMSPSDLYSPGSWDPITAALSQRAMVLGKSGELKTWGLVLGALKAAREEQVTSEQAKFWLGLGGGRVSPPGPECIEKPATERRIDKGEEVGETTAQRDAKMAPEKMATPKTVGTSCYQCGTATGCNCATASAPPPPYVGSGLYPSLAGVGEQQGQGGDTPWGAEQPRAEPGHAGLAPGPALTDWARIREELASTGPPVVAMPVVIKTEGPAWTPLEPKLITRLADTVRTKGLRSPITMAEVEALMSSPLLPHDVTNLMRVILGPAPYALWMDAWGVQLQTVIAAATRDPRHPANGQGRGERTNLDRLKGLADGMVGNPQGQAALLRPGELVAITASALQAFREVARLAEPAGPWADITQGPSESFVDFANRLIKAVEGSDLPPSARAPVIIDCFRQKSQPDIQQLIRAAPSTLTTPGEIIKYVLDRQKIAPLTDQGIAAAMSSAIQPLVMAVVNRERDGQTGSGGRARGLCYTCGSPGHYQAQCPKKRKSGNSRERCQLCDGMGHNAKQCRRRDGNQGQRPGKGLSSGSWPVSEQPAVSLAMTMEHKDRPLVRVILTNTGSHPVKQRSVYITALLDSGADITIISEEDWPTDWPVMEAANPQIHGIGGGIPMRKSRDMIEVGVINRDGSLERPLLLFPAVAMVRGSILGRDCLQGLGLRLTNL.

Over residues 124 to 141 the composition is skewed to basic and acidic residues; it reads KGEEVGETTAQRDAKMAP. The interval 124-144 is disordered; sequence KGEEVGETTAQRDAKMAPEKM. A PPXY motif motif is present at residues 172 to 175; that stretch reads PPPY. Residues 180 to 184 carry the LYPX(n)L motif motif; that stretch reads LYPSL. 3 involved in capsid protein dimerization regions span residues 217–259, 290–298, and 351–362; these read PALT…KLIT, HDVTNLMRV, and GMVGNPQGQAAL. The Nuclear export signal motif lies at 219–229; it reads LTDWARIREEL. 2 consecutive CCHC-type zinc fingers follow at residues 507 to 524 and 533 to 550; these read GLCY…QCPK and ERCQ…QCRR. Residues 524–527 carry the Nuclear/nucleolar localization signal motif; the sequence is KKRK. The interval 544–571 is disordered; sequence NAKQCRRRDGNQGQRPGKGLSSGSWPVS. The 82-residue stretch at 609–690 folds into the Peptidase A2 domain; sequence ITALLDSGAD…VRGSILGRDC (82 aa). Asp-614 acts as the For protease activity; shared with dimeric partner in catalysis.

Active as a homodimer. As to quaternary structure, homodimer. Homomultimer. Homohexamer. In terms of assembly, homohexamer. Interacts (via p2B domain) with host PACSIN2; this interaction probably allows PACSIN2 recruitment to viral assembly sites. Specific enzymatic cleavages in vivo yield mature proteins. The cleavage at the C-terminus of the Capsid protein p27 is slowly trimmed by the viral protease, sometimes being cut internally thereby generating the short version of the capsid protein and a capsid protein C-terminally extended by 3 amino acids in a ratio of 2:1.

It localises to the virion. It is found in the host nucleus. The protein resides in the host nucleolus. Its subcellular location is the host nucleoplasm. The p10 domain folds back and interacts with the capsid protein domain during Gag polyprotein assembly in the immature particle (before the maturation cleavage thatz splits the 2 domains). In terms of biological role, self-associates to form the irregular polyhedron core composed of hexamers and pentamers, that encapsulates the genomic RNA-nucleocapsid complex. Assembles as a tube in vitro. Binds to inositol hexakisphosphate (IP6), which allows the assembly of the polyhedral capsid. Functionally, binds strongly to viral nucleic acids and promotes their packaging. Plays a role in the maturation-stabilization of the viral dimeric RNA via highly structured zinc-binding motifs. Its function is as follows. Plays a role in the oligomerization of the Gag polyprotein and in the stabilization of the immature particle. Essential layering element during tube assembly. Allows the cooperative binging of Gag to the host plasma membrane. Aspartyl protease that mediates proteolytic cleavages of Gag and Gag-Pol polyproteins during or shortly after the release of the virion from the plasma membrane. Cleavages take place as an ordered, step-wise cascade to yield mature proteins. This process is called maturation. Displays maximal activity during the budding process just prior to particle release from the cell. The polypeptide is Gag polyprotein (gag) (Avian leukosis virus subgroup A (isolate RSA) (ALV-A RSA)).